The primary structure comprises 268 residues: Cell division coordinator CpoB (268 aa).

The N-terminal stretch at 1–21 is a signal peptide; it reads MRMCRRVVTVLALSLPLAAWA. Residues 58 to 94 are a coiled coil; the sequence is QLFMQLQQMQDQLSRQQGIIEELQNDVSRMKQENLER. The segment at 104–146 is disordered; the sequence is SGAAPAATPDNSSGGGASNAAPDAAAGAAAQQPAGSSQPGDPA. Over residues 121-143 the composition is skewed to low complexity; it reads SNAAPDAAAGAAAQQPAGSSQPG. TPR repeat units lie at residues 149 to 181, 185 to 218, and 222 to 255; these read KLYY…YPNS, GNAQ…YPKH, and PDSL…YPGT.

This sequence belongs to the CpoB family.

It localises to the periplasm. Mediates coordination of peptidoglycan synthesis and outer membrane constriction during cell division. This Pseudomonas putida (strain ATCC 47054 / DSM 6125 / CFBP 8728 / NCIMB 11950 / KT2440) protein is Cell division coordinator CpoB.